The following is a 265-amino-acid chain: Glutamate racemase (265 aa).

Substrate is bound by residues 7–8 (DS) and 39–40 (YG). Cys70 functions as the Proton donor/acceptor in the catalytic mechanism. 71-72 (NT) is a substrate binding site. Cys177 (proton donor/acceptor) is an active-site residue.

Belongs to the aspartate/glutamate racemases family.

It carries out the reaction L-glutamate = D-glutamate. Its pathway is cell wall biogenesis; peptidoglycan biosynthesis. Provides the (R)-glutamate required for cell wall biosynthesis. The sequence is that of Glutamate racemase from Prochlorococcus marinus (strain NATL2A).